The primary structure comprises 891 residues: Dynein axonemal intermediate chain 3 (891 aa).

Residues 1–16 (MAPKQKKKSSRRKKSP) are compositionally biased toward basic residues. Residues 1 to 27 (MAPKQKKKSSRRKKSPKPILAASEDME) are disordered. WD repeat units follow at residues 395 to 435 (ESPD…DRIE), 477 to 533 (GHKR…PLTP), 670 to 709 (IHDG…GPLL), and 713 to 753 (CAPK…HEPA). Positions 817-861 (HLEYVEQRKKIREQEKKEMEQEMAKKKVKIYQKSKEQMEAELKMD) form a coiled coil.

Interacts with ACTR2; this interaction reduces binding of the Arp2/3 complex to the VCA domain of nucleation promoting factors. Part of the multisubunit axonemal dynein complex formed at least of two heavy chains and a number of intermediate and light chains. Found in a associated with the catalytic heavy chain DNAH2, the intermediate chain DNAI4, and the light chain DYNLT1.

Its subcellular location is the cytoplasm. Acts as a negative regulator of cell migration, invasion, and metastasis downstream of p53/TP53, through inhibition of Arp2/3 complex-mediated actin polymerization. Via its association with the multisubunit axonemal dynein complex, is potentially involved in the regulation of cilia function. May play a role in osteogenesis of dental tissue-derived mesenchymal stem cells. The sequence is that of Dynein axonemal intermediate chain 3 (DNAI3) from Macaca fascicularis (Crab-eating macaque).